The sequence spans 290 residues: Ribonuclease HIII (290 aa).

The region spanning 78–290 (LPLIGTDEVG…FKNTEKAKNA (213 aa)) is the RNase H type-2 domain. A divalent metal cation-binding residues include aspartate 84, glutamate 85, and aspartate 187.

It belongs to the RNase HII family. RnhC subfamily. It depends on Mn(2+) as a cofactor. Requires Mg(2+) as cofactor.

Its subcellular location is the cytoplasm. It carries out the reaction Endonucleolytic cleavage to 5'-phosphomonoester.. Its function is as follows. Endonuclease that specifically degrades the RNA of RNA-DNA hybrids. The protein is Ribonuclease HIII of Streptococcus pneumoniae (strain CGSP14).